Here is a 131-residue protein sequence, read N- to C-terminus: Profilin (131 aa).

Belongs to the profilin family. As to quaternary structure, occurs in many kinds of cells as a complex with monomeric actin in a 1:1 ratio.

Its subcellular location is the cytoplasm. It is found in the cytoskeleton. Functionally, binds to actin and affects the structure of the cytoskeleton. At high concentrations, profilin prevents the polymerization of actin, whereas it enhances it at low concentrations. By binding to PIP2, it inhibits the formation of IP3 and DG. In Capsicum annuum (Capsicum pepper), this protein is Profilin.